The primary structure comprises 197 residues: MSASRFVKCVTVGDGAVGKTCLLISYTSNTFPTDYVPTVFDNFSANVVVNGSTVNLGLWDTAGQEDYNRLRPLSYRGADVFILAFSLISKASYENVSKKWIPELKHYAPGVPIVLVGTKLDLRDDKQFFIDHPGAVPITTAQGEELRKQIGAPTYIECSSKTQENVKAVFDAAIRVVLQPPKQKKKKSKAQKACSIL.

13-20 serves as a coordination point for GTP; sequence GDGAVGKT. The Effector region motif lies at 35–43; sequence YVPTVFDNF. GTP is bound by residues 60–64 and 118–121; these read DTAGQ and TKLD. Cysteine 194 carries the cysteine methyl ester modification. Cysteine 194 carries the S-geranylgeranyl cysteine lipid modification. Positions 195 to 197 are cleaved as a propeptide — removed in mature form; sequence SIL.

The protein belongs to the small GTPase superfamily. Rho family. As to quaternary structure, part of a complex containing ROPGEF1 and PRK2. Interacts with UGT1, ICR1, ICR2, ICR3, ICR4 and ICR5. Interacts with PHIP1 when activated by GTP. In terms of tissue distribution, exclusively expressed in mature pollen and pollen tubes.

Its subcellular location is the cytoplasm. The protein resides in the membrane. It carries out the reaction GTP + H2O = GDP + phosphate + H(+). Functionally, may be involved in cell polarity control during the actin-dependent tip growth of pollen tubes. May regulate callose synthase 1 (CALS1) activity through the interaction with UGT1. Inactive GDP-bound Rho GTPases reside in the cytosol, are found in a complex with Rho GDP-dissociation inhibitors (Rho GDIs), and are released from the GDI protein in order to translocate to membranes upon activation. In Arabidopsis thaliana (Mouse-ear cress), this protein is Rac-like GTP-binding protein ARAC11.